Consider the following 78-residue polypeptide: U7-lycotoxin-Ls1f (78 aa).

Residues 1-22 form the signal peptide; that stretch reads MKLIIFTGLALLLIVSLIDVEA. The propeptide occupies 23 to 26; it reads QNEG.

It belongs to the neurotoxin 19 (CSTX) family. 07 (U7-Lctx) subfamily. Contains 4 disulfide bonds. Expressed by the venom gland.

Its subcellular location is the secreted. This is U7-lycotoxin-Ls1f from Lycosa singoriensis (Wolf spider).